We begin with the raw amino-acid sequence, 147 residues long: Large ribosomal subunit protein uL15 (147 aa).

The segment covering 1 to 13 has biased composition (basic and acidic residues); the sequence is MKLENLKSKEGSR. Residues 1-54 form a disordered region; the sequence is MKLENLKSKEGSRHKTKRVGRGFGSGIGKTSTRGSKGQKSRKSGHTRPGFEGGQ. The span at 36-45 shows a compositional bias: basic residues; it reads KGQKSRKSGH.

The protein belongs to the universal ribosomal protein uL15 family. In terms of assembly, part of the 50S ribosomal subunit.

Its function is as follows. Binds to the 23S rRNA. This chain is Large ribosomal subunit protein uL15, found in Malacoplasma penetrans (strain HF-2) (Mycoplasma penetrans).